Reading from the N-terminus, the 106-residue chain is A-type ATP synthase subunit F (106 aa).

This sequence belongs to the V-ATPase F subunit family. As to quaternary structure, has multiple subunits with at least A(3), B(3), C, D, E, F, H, I and proteolipid K(x).

The protein resides in the cell membrane. Component of the A-type ATP synthase that produces ATP from ADP in the presence of a proton gradient across the membrane. This chain is A-type ATP synthase subunit F, found in Haloferax volcanii (strain ATCC 29605 / DSM 3757 / JCM 8879 / NBRC 14742 / NCIMB 2012 / VKM B-1768 / DS2) (Halobacterium volcanii).